We begin with the raw amino-acid sequence, 423 residues long: Glutamate-1-semialdehyde 2,1-aminomutase (423 aa).

Residue Lys-262 is modified to N6-(pyridoxal phosphate)lysine.

Belongs to the class-III pyridoxal-phosphate-dependent aminotransferase family. HemL subfamily. In terms of assembly, homodimer. Requires pyridoxal 5'-phosphate as cofactor.

It localises to the cytoplasm. It catalyses the reaction (S)-4-amino-5-oxopentanoate = 5-aminolevulinate. It functions in the pathway porphyrin-containing compound metabolism; protoporphyrin-IX biosynthesis; 5-aminolevulinate from L-glutamyl-tRNA(Glu): step 2/2. The sequence is that of Glutamate-1-semialdehyde 2,1-aminomutase from Saccharophagus degradans (strain 2-40 / ATCC 43961 / DSM 17024).